Here is a 68-residue protein sequence, read N- to C-terminus: DNA-directed RNA polymerase subunit omega (68 aa).

This sequence belongs to the RNA polymerase subunit omega family. As to quaternary structure, the RNAP catalytic core consists of 2 alpha, 1 beta, 1 beta' and 1 omega subunit. When a sigma factor is associated with the core the holoenzyme is formed, which can initiate transcription.

It catalyses the reaction RNA(n) + a ribonucleoside 5'-triphosphate = RNA(n+1) + diphosphate. Its function is as follows. Promotes RNA polymerase assembly. Latches the N- and C-terminal regions of the beta' subunit thereby facilitating its interaction with the beta and alpha subunits. The protein is DNA-directed RNA polymerase subunit omega of Desulforapulum autotrophicum (strain ATCC 43914 / DSM 3382 / VKM B-1955 / HRM2) (Desulfobacterium autotrophicum).